The sequence spans 411 residues: Peptidase T (411 aa).

Zn(2+) is bound at residue His-79. The active site involves Asp-81. Zn(2+) is bound at residue Asp-142. Glu-176 serves as the catalytic Proton acceptor. 3 residues coordinate Zn(2+): Glu-177, Asp-199, and His-381.

This sequence belongs to the peptidase M20B family. It depends on Zn(2+) as a cofactor.

The protein resides in the cytoplasm. The enzyme catalyses Release of the N-terminal residue from a tripeptide.. Functionally, cleaves the N-terminal amino acid of tripeptides. This is Peptidase T from Geobacillus thermodenitrificans (strain NG80-2).